We begin with the raw amino-acid sequence, 226 residues long: Agamous-like MADS-box protein AP3 (226 aa).

One can recognise an MADS-box domain in the interval 1 to 61 (MARGKIEIKR…GKLHEYISPS (61 aa)). Positions 84–174 (YERMQENLKK…LHEFDARDRD (91 aa)) constitute a K-box domain.

In terms of tissue distribution, expressed during flower development in stamens and petals.

The protein localises to the nucleus. Functionally, probable transcription factor involved in flower development. The polypeptide is Agamous-like MADS-box protein AP3 (Vitis vinifera (Grape)).